The sequence spans 95 residues: Acylphosphatase (95 aa).

In terms of domain architecture, Acylphosphatase-like spans 6–94 (RVRVIVKGIV…EDFTGFSVRY (89 aa)). Residues Arg21 and Asn39 contribute to the active site.

This sequence belongs to the acylphosphatase family.

It carries out the reaction an acyl phosphate + H2O = a carboxylate + phosphate + H(+). In Caldivirga maquilingensis (strain ATCC 700844 / DSM 13496 / JCM 10307 / IC-167), this protein is Acylphosphatase (acyP).